The chain runs to 348 residues: tRNA pseudouridine synthase D (348 aa).

Asp84 serves as the catalytic Nucleophile. A TRUD domain is found at 162-308; the sequence is GVPNYFGPQR…ARMDRRPLCL (147 aa).

It belongs to the pseudouridine synthase TruD family.

The catalysed reaction is uridine(13) in tRNA = pseudouridine(13) in tRNA. In terms of biological role, responsible for synthesis of pseudouridine from uracil-13 in transfer RNAs. The sequence is that of tRNA pseudouridine synthase D from Chromohalobacter salexigens (strain ATCC BAA-138 / DSM 3043 / CIP 106854 / NCIMB 13768 / 1H11).